The chain runs to 197 residues: Amino-terminal enhancer of split (197 aa).

Over residues 1 to 15 (MMFPQSSSRHSGSSH) the composition is skewed to low complexity. Disordered regions lie at residues 1 to 20 (MMFPQSSSRHSGSSHMPQQL) and 169 to 197 (LGSQGHLPKEDKNGHEGDRRPDDDGDKSD). Residues 166-197 (LSALGSQGHLPKEDKNGHEGDRRPDDDGDKSD) are CCN domain. Basic and acidic residues predominate over residues 175 to 197 (LPKEDKNGHEGDRRPDDDGDKSD).

The protein belongs to the WD repeat Groucho/TLE family. Monomer. Ubiquitinated by XIAP/BIRC4. As to expression, predominantly expressed in brain, testis and ovary. Ubiquitously expressed in the developing embryo. Present in unfertilized and fertilized eggs.

The protein localises to the nucleus. May act as a transcriptional corepressor. Has a possible role in the negative regulation of proteins containing WD-40 repeats. May be required for the initiation and maintenance of the differentiated state. This Xenopus laevis (African clawed frog) protein is Amino-terminal enhancer of split (aes).